The following is a 545-amino-acid chain: CTP synthase (545 aa).

Residues 1–266 (MTTNYIFVTG…DDYICKRFSL (266 aa)) are amidoligase domain. Ser-14 contributes to the CTP binding site. Ser-14 provides a ligand contact to UTP. ATP-binding positions include 15-20 (SLGKGI) and Asp-72. Asp-72 and Glu-140 together coordinate Mg(2+). CTP-binding positions include 147–149 (DIE), 187–192 (KTKPTQ), and Lys-223. UTP-binding positions include 187–192 (KTKPTQ) and Lys-223. 239 to 241 (KDV) serves as a coordination point for ATP. In terms of domain architecture, Glutamine amidotransferase type-1 spans 291-542 (TIGMVGKYIE…VKAANEHQKR (252 aa)). Residue Gly-352 coordinates L-glutamine. Cys-379 acts as the Nucleophile; for glutamine hydrolysis in catalysis. Residues 380-383 (LGMQ), Glu-403, and Arg-470 each bind L-glutamine. Catalysis depends on residues His-515 and Glu-517.

The protein belongs to the CTP synthase family. In terms of assembly, homotetramer.

It carries out the reaction UTP + L-glutamine + ATP + H2O = CTP + L-glutamate + ADP + phosphate + 2 H(+). The catalysed reaction is L-glutamine + H2O = L-glutamate + NH4(+). The enzyme catalyses UTP + NH4(+) + ATP = CTP + ADP + phosphate + 2 H(+). Its pathway is pyrimidine metabolism; CTP biosynthesis via de novo pathway; CTP from UDP: step 2/2. Allosterically activated by GTP, when glutamine is the substrate; GTP has no effect on the reaction when ammonia is the substrate. The allosteric effector GTP functions by stabilizing the protein conformation that binds the tetrahedral intermediate(s) formed during glutamine hydrolysis. Inhibited by the product CTP, via allosteric rather than competitive inhibition. Functionally, catalyzes the ATP-dependent amination of UTP to CTP with either L-glutamine or ammonia as the source of nitrogen. Regulates intracellular CTP levels through interactions with the four ribonucleotide triphosphates. The sequence is that of CTP synthase from Salmonella newport (strain SL254).